The chain runs to 280 residues: UDP-3-O-acyl-N-acetylglucosamine deacetylase (280 aa).

Positions 79, 237, and 241 each coordinate Zn(2+). H264 functions as the Proton donor in the catalytic mechanism.

The protein belongs to the LpxC family. Requires Zn(2+) as cofactor.

The enzyme catalyses a UDP-3-O-[(3R)-3-hydroxyacyl]-N-acetyl-alpha-D-glucosamine + H2O = a UDP-3-O-[(3R)-3-hydroxyacyl]-alpha-D-glucosamine + acetate. It functions in the pathway glycolipid biosynthesis; lipid IV(A) biosynthesis; lipid IV(A) from (3R)-3-hydroxytetradecanoyl-[acyl-carrier-protein] and UDP-N-acetyl-alpha-D-glucosamine: step 2/6. Its function is as follows. Catalyzes the hydrolysis of UDP-3-O-myristoyl-N-acetylglucosamine to form UDP-3-O-myristoylglucosamine and acetate, the committed step in lipid A biosynthesis. The sequence is that of UDP-3-O-acyl-N-acetylglucosamine deacetylase from Chlamydia caviae (strain ATCC VR-813 / DSM 19441 / 03DC25 / GPIC) (Chlamydophila caviae).